Here is a 723-residue protein sequence, read N- to C-terminus: Fatty acid oxidation complex subunit alpha (723 aa).

An enoyl-CoA hydratase/isomerase region spans residues 1–189; it reads MIYQAKTLQV…KVGLLDAIVD (189 aa). Residue aspartate 296 coordinates substrate. Residues 311–723 form a 3-hydroxyacyl-CoA dehydrogenase region; the sequence is SQDTQHAAVL…FYSAQQVSAL (413 aa). NAD(+) contacts are provided by residues methionine 325, aspartate 344, 401 to 403, lysine 408, and serine 430; that span reads VVE. Catalysis depends on histidine 451, which acts as the For 3-hydroxyacyl-CoA dehydrogenase activity. Asparagine 454 contributes to the NAD(+) binding site. Residues asparagine 501 and tyrosine 661 each coordinate substrate.

The protein in the N-terminal section; belongs to the enoyl-CoA hydratase/isomerase family. In the C-terminal section; belongs to the 3-hydroxyacyl-CoA dehydrogenase family. Heterotetramer of two alpha chains (FadB) and two beta chains (FadA).

It catalyses the reaction a (3S)-3-hydroxyacyl-CoA + NAD(+) = a 3-oxoacyl-CoA + NADH + H(+). The enzyme catalyses a (3S)-3-hydroxyacyl-CoA = a (2E)-enoyl-CoA + H2O. The catalysed reaction is a 4-saturated-(3S)-3-hydroxyacyl-CoA = a (3E)-enoyl-CoA + H2O. It carries out the reaction (3S)-3-hydroxybutanoyl-CoA = (3R)-3-hydroxybutanoyl-CoA. It catalyses the reaction a (3Z)-enoyl-CoA = a 4-saturated (2E)-enoyl-CoA. The enzyme catalyses a (3E)-enoyl-CoA = a 4-saturated (2E)-enoyl-CoA. It participates in lipid metabolism; fatty acid beta-oxidation. In terms of biological role, involved in the aerobic and anaerobic degradation of long-chain fatty acids via beta-oxidation cycle. Catalyzes the formation of 3-oxoacyl-CoA from enoyl-CoA via L-3-hydroxyacyl-CoA. It can also use D-3-hydroxyacyl-CoA and cis-3-enoyl-CoA as substrate. This is Fatty acid oxidation complex subunit alpha from Vibrio cholerae serotype O1 (strain ATCC 39315 / El Tor Inaba N16961).